A 146-amino-acid chain; its full sequence is MRLNQLSPSAGSRPDAKRAGRGAGSGLGKTAGRGHKGQHSRSGGFHKVGFEGGQMPLQRRVPKYGFSSQKGLRTAEVRLHEIARVDGDTVDLAALHKAGVVRKNMRYVKVIASGTIDRAVSVRGVKVTQGARKAIEAAGGQVVEEG.

The segment covering 1 to 10 (MRLNQLSPSA) has biased composition (polar residues). Positions 1–54 (MRLNQLSPSAGSRPDAKRAGRGAGSGLGKTAGRGHKGQHSRSGGFHKVGFEGGQ) are disordered. Positions 21–31 (RGAGSGLGKTA) are enriched in gly residues.

This sequence belongs to the universal ribosomal protein uL15 family. Part of the 50S ribosomal subunit.

Binds to the 23S rRNA. This chain is Large ribosomal subunit protein uL15, found in Halorhodospira halophila (strain DSM 244 / SL1) (Ectothiorhodospira halophila (strain DSM 244 / SL1)).